Consider the following 100-residue polypeptide: UPF0213 protein YhbQ (100 aa).

Residues 2-77 (TPWFLYLIRT…KQLTKRQKER (76 aa)) enclose the GIY-YIG domain.

Belongs to the UPF0213 family.

In Escherichia coli O127:H6 (strain E2348/69 / EPEC), this protein is UPF0213 protein YhbQ.